A 296-amino-acid polypeptide reads, in one-letter code: Glycine N-acyltransferase (296 aa).

N6-acetyllysine; alternate occurs at positions 16, 127, and 141. Residues Lys16, Lys127, and Lys141 each carry the N6-succinyllysine; alternate modification. N6-acetyllysine is present on Lys159. Position 169 is an N6-succinyllysine (Lys169). 2 positions are modified to N6-acetyllysine; alternate: Lys183 and Lys256. N6-succinyllysine; alternate occurs at positions 183 and 256.

This sequence belongs to the glycine N-acyltransferase family.

The protein localises to the mitochondrion. The catalysed reaction is an acyl-CoA + glycine = an N-acylglycine + CoA + H(+). It carries out the reaction benzoyl-CoA + glycine = N-benzoylglycine + CoA + H(+). In terms of biological role, mitochondrial acyltransferase which transfers an acyl group to the N-terminus of glycine and glutamine, although much less efficiently. Can conjugate a multitude of substrates to form a variety of N-acylglycines, thereby detoxify xenobiotics, such as benzoic acid or salicylic acid, and endogenous organic acids, such as isovaleric acid. The chain is Glycine N-acyltransferase (GLYAT) from Pongo abelii (Sumatran orangutan).